The sequence spans 521 residues: Probable protein kinase UbiB (521 aa).

Residues S119 to A497 form the Protein kinase domain. ATP is bound by residues V125–V133 and K151. D286 acts as the Proton acceptor in catalysis. Residues Q496–V516 traverse the membrane as a helical segment.

This sequence belongs to the ABC1 family. UbiB subfamily.

Its subcellular location is the cell inner membrane. It functions in the pathway cofactor biosynthesis; ubiquinone biosynthesis [regulation]. In terms of biological role, is probably a protein kinase regulator of UbiI activity which is involved in aerobic coenzyme Q (ubiquinone) biosynthesis. The polypeptide is Probable protein kinase UbiB (Delftia acidovorans (strain DSM 14801 / SPH-1)).